The primary structure comprises 286 residues: Beta-lactamase SHV-29 (286 aa).

An N-terminal signal peptide occupies residues 1 to 21; the sequence is MRYIRLCIISLLATLPLAVHA. The active-site Acyl-ester intermediate is the serine 66. Cysteine 73 and cysteine 119 form a disulfide bridge. Glutamate 164 functions as the Proton acceptor in the catalytic mechanism. 230 to 232 lines the substrate pocket; it reads KTG.

The protein belongs to the class-A beta-lactamase family.

The enzyme catalyses a beta-lactam + H2O = a substituted beta-amino acid. This chain is Beta-lactamase SHV-29 (bla), found in Klebsiella pneumoniae.